Reading from the N-terminus, the 190-residue chain is Nucleoside triphosphate pyrophosphatase (190 aa).

Catalysis depends on Asp69, which acts as the Proton acceptor.

Belongs to the Maf family. The cofactor is a divalent metal cation.

It is found in the cytoplasm. It catalyses the reaction a ribonucleoside 5'-triphosphate + H2O = a ribonucleoside 5'-phosphate + diphosphate + H(+). The catalysed reaction is a 2'-deoxyribonucleoside 5'-triphosphate + H2O = a 2'-deoxyribonucleoside 5'-phosphate + diphosphate + H(+). Its function is as follows. Nucleoside triphosphate pyrophosphatase. May have a dual role in cell division arrest and in preventing the incorporation of modified nucleotides into cellular nucleic acids. The protein is Nucleoside triphosphate pyrophosphatase of Helicobacter pylori (strain G27).